Here is a 532-residue protein sequence, read N- to C-terminus: Telomerase Cajal body protein 1 (532 aa).

Positions 1–53 (MKTSEERLLAPDSLPPDLAPAPVPQGSPAEKNTDFEPVPPPCGGDDQPQLATD) are disordered. Positions 13 to 25 (SLPPDLAPAPVPQ) are enriched in pro residues. Phosphoserine occurs at positions 27, 61, and 83. Residues 80-122 (SELSPGIEEQDVSEHASLPGEETNLPELESGEATEGVSEERAE) are disordered. WD repeat units follow at residues 151-190 (RSENFLKGCKWAPDGSCILTNSADNVLRIYNLPPELYSEQ), 206-251 (EGDT…LRAS), 256-297 (NHLD…RDCE), 307-348 (GQSG…ALLG), 349-389 (GHQG…HLLW), and 395-434 (VTTNQRIYFDLDPSGQFLVSGNTSGVVSVWDISGALSDDS). Phosphothreonine is present on T474. S476 carries the phosphoserine modification. The segment at 510 to 532 (DPSSPVDDQDEKGQRRTEAVGMS) is disordered. Positions 520–532 (EKGQRRTEAVGMS) are enriched in basic and acidic residues.

It belongs to the TCAB1 family. Component of the telomerase holoenzyme complex composed of one molecule of TERT, one molecule of WRAP53/TCAB1, two molecules of H/ACA ribonucleoprotein complex subunits DKC1, NOP10, NHP2 and GAR1, and a telomerase RNA template component (TERC). The telomerase holoenzyme complex is associated with TEP1, SMG6/EST1A and POT1. Interacts with the chaperonin-containing T-complex (TRiC) complex; which mediates the folding of WRAP53/TCAB1. Interacts with COIL. Interacts with SMN1. Interacts with RNF8. Interacts with histone H2AX. In terms of processing, phosphorylated at Ser-61 by ATM in response to DNA damage, promoting its interaction with histone H2AX and localization to sites of DNA double-strand breaks.

The protein resides in the nucleus. Its subcellular location is the cajal body. It is found in the chromosome. It localises to the telomere. Functionally, RNA chaperone that plays a key role in telomere maintenance and RNA localization to Cajal bodies. Specifically recognizes and binds the Cajal body box (CAB box) present in both small Cajal body RNAs (scaRNAs) and telomerase RNA template component (TERC). Essential component of the telomerase holoenzyme complex, a ribonucleoprotein complex essential for the replication of chromosome termini that elongates telomeres in most eukaryotes. In the telomerase holoenzyme complex, required to stimulate the catalytic activity of the complex. Acts by specifically binding the CAB box of the TERC RNA and controlling the folding of the CR4/CR5 region of the TERC RNA, a critical step for telomerase activity. In addition, also controls telomerase holoenzyme complex localization to Cajal body. During S phase, required for delivery of TERC to telomeres during S phase and for telomerase activity. In addition to its role in telomere maintenance, also required for Cajal body formation, probably by mediating localization of scaRNAs to Cajal bodies. Also plays a role in DNA repair: phosphorylated by ATM in response to DNA damage and relocalizes to sites of DNA double-strand breaks to promote the repair of DNA double-strand breaks. Acts by recruiting the ubiquitin ligase RNF8 to DNA breaks and promote both homologous recombination (HR) and non-homologous end joining (NHEJ). The chain is Telomerase Cajal body protein 1 from Mus musculus (Mouse).